A 118-amino-acid chain; its full sequence is Large ribosomal subunit protein uL24 (118 aa).

This sequence belongs to the universal ribosomal protein uL24 family. As to quaternary structure, part of the 50S ribosomal subunit.

Its function is as follows. One of two assembly initiator proteins, it binds directly to the 5'-end of the 23S rRNA, where it nucleates assembly of the 50S subunit. In terms of biological role, one of the proteins that surrounds the polypeptide exit tunnel on the outside of the subunit. This is Large ribosomal subunit protein uL24 from Prochlorococcus marinus subsp. pastoris (strain CCMP1986 / NIES-2087 / MED4).